The primary structure comprises 23 residues: Magainin-BM2 (23 aa).

Expressed by the skin glands.

Its subcellular location is the secreted. Functionally, antimicrobial peptide. This chain is Magainin-BM2, found in Xenopus boumbaensis (Mawa clawed frog).